The primary structure comprises 382 residues: Galactokinase (382 aa).

34–37 (EHTD) is a binding site for substrate. 124-130 (GAGLSSS) contacts ATP. The Mg(2+) site is built by Ser-130 and Glu-162. Asp-174 (proton acceptor) is an active-site residue. Tyr-223 provides a ligand contact to substrate.

This sequence belongs to the GHMP kinase family. GalK subfamily.

The protein resides in the cytoplasm. The enzyme catalyses alpha-D-galactose + ATP = alpha-D-galactose 1-phosphate + ADP + H(+). Its pathway is carbohydrate metabolism; galactose metabolism. Functionally, catalyzes the transfer of the gamma-phosphate of ATP to D-galactose to form alpha-D-galactose-1-phosphate (Gal-1-P). The sequence is that of Galactokinase from Salmonella typhi.